A 290-amino-acid chain; its full sequence is Cilia- and flagella-associated protein 298 (290 aa).

The protein belongs to the CFAP298 family. Interacts with ZMYND10. As to expression, expressed in the trachea (at protein level).

Its subcellular location is the cytoplasm. The protein localises to the cytoskeleton. It is found in the cilium basal body. Plays a role in motile cilium function, possibly by acting on outer dynein arm assembly. Seems to be important for initiation rather than maintenance of cilium motility. Required for correct positioning of cilia at the apical cell surface, suggesting an additional role in the planar cell polarity (PCP) pathway. May suppress canonical Wnt signaling activity. The protein is Cilia- and flagella-associated protein 298 of Rattus norvegicus (Rat).